We begin with the raw amino-acid sequence, 227 residues long: Urease accessory protein UreF (227 aa).

It belongs to the UreF family. In terms of assembly, ureD, UreF and UreG form a complex that acts as a GTP-hydrolysis-dependent molecular chaperone, activating the urease apoprotein by helping to assemble the nickel containing metallocenter of UreC. The UreE protein probably delivers the nickel.

Its subcellular location is the cytoplasm. Required for maturation of urease via the functional incorporation of the urease nickel metallocenter. This Actinobacillus pleuropneumoniae serotype 3 (strain JL03) protein is Urease accessory protein UreF.